The chain runs to 484 residues: Cysteine--tRNA ligase (484 aa).

Cys27 lines the Zn(2+) pocket. Positions Pro29 to Asn39 match the 'HIGH' region motif. Residues Cys207, His232, and Glu236 each contribute to the Zn(2+) site. The short motif at Lys264–Ser268 is the 'KMSKS' region element. Lys267 provides a ligand contact to ATP.

Belongs to the class-I aminoacyl-tRNA synthetase family. As to quaternary structure, monomer. Zn(2+) serves as cofactor.

It localises to the cytoplasm. It carries out the reaction tRNA(Cys) + L-cysteine + ATP = L-cysteinyl-tRNA(Cys) + AMP + diphosphate. The polypeptide is Cysteine--tRNA ligase (Pelotomaculum thermopropionicum (strain DSM 13744 / JCM 10971 / SI)).